Here is a 314-residue protein sequence, read N- to C-terminus: Acetyl-coenzyme A carboxylase carboxyl transferase subunit beta (314 aa).

Residues Val-25–Phe-294 form the CoA carboxyltransferase N-terminal domain. Residues Cys-29, Cys-32, Cys-48, and Cys-51 each contribute to the Zn(2+) site. A C4-type zinc finger spans residues Cys-29–Cys-51.

This sequence belongs to the AccD/PCCB family. Acetyl-CoA carboxylase is a heterohexamer composed of biotin carboxyl carrier protein (AccB), biotin carboxylase (AccC) and two subunits each of ACCase subunit alpha (AccA) and ACCase subunit beta (AccD). Requires Zn(2+) as cofactor.

The protein resides in the cytoplasm. It carries out the reaction N(6)-carboxybiotinyl-L-lysyl-[protein] + acetyl-CoA = N(6)-biotinyl-L-lysyl-[protein] + malonyl-CoA. The protein operates within lipid metabolism; malonyl-CoA biosynthesis; malonyl-CoA from acetyl-CoA: step 1/1. Component of the acetyl coenzyme A carboxylase (ACC) complex. Biotin carboxylase (BC) catalyzes the carboxylation of biotin on its carrier protein (BCCP) and then the CO(2) group is transferred by the transcarboxylase to acetyl-CoA to form malonyl-CoA. The polypeptide is Acetyl-coenzyme A carboxylase carboxyl transferase subunit beta (Photorhabdus laumondii subsp. laumondii (strain DSM 15139 / CIP 105565 / TT01) (Photorhabdus luminescens subsp. laumondii)).